The primary structure comprises 619 residues: MNNQGGAVAANGQRPQAQQQQQQGGIMGIISTLIRFMAIYYIASFAFSKFLGTGNNNNNGGVVLNNNNGTTNTSIPSNSVRLANSWPEGIEFNMKVYLSTSNETVGDWLVWEQDKLSYDWKDSNTIPTKNITFDTTPYLQNNGSLFAHIITSRRAYLNQPKSQLHKVHPLIVYLPKPKPKGKNLLEEKSKDEPEVEYDPTELISYWKPTLSLHLIVDHTIYPPDSIPKEIVSYFNITNGFYSPIIYCNEFWLYREHLKPVNETVKQLSIEINYSSMGLFKWQLQIQMQKSLDMQESFGGGGNSAMGGASVGDEFKRMLTDNDPWILGLTLIVSVLHTIFEFLAFKNDIQFWKNNKSMEGLSVKTITLNCVCMGIIFLYLLDNETSYMILASSGFGFLVEFWKLGKAMTIKITWMTSLPLPKRIEFINKDEYMSKTKQYDDMAMKYLSWLLFPLVIGTSIYSLYYHEHKSWYSWVVSSLVRTVYTFEFIMMTPQLFINYKLKSVSHLPWRVFMYRALNTFIDDLFAFIIKMPLLHRLSCLRDDIIFIVYLYQRWIYPVDKKRSHYGSEEAEEVQQQDKKEIKEKVEEREEEKQEEEEEEKEKEEESTSSSKVTKRKTKKV.

Residues 1 to 21 form a disordered region; that stretch reads MNNQGGAVAANGQRPQAQQQQ. Residues 9–21 are compositionally biased toward low complexity; that stretch reads AANGQRPQAQQQQ. A run of 6 helical transmembrane segments spans residues 26–46, 324–344, 360–380, 384–404, 445–465, and 474–496; these read IMGI…ASFA, WILG…FLAF, LSVK…LYLL, TSYM…WKLG, YLSW…LYYH, and VVSS…QLFI. The segment at 566-619 is disordered; it reads SEEAEEVQQQDKKEIKEKVEEREEEKQEEEEEEKEKEEESTSSSKVTKRKTKKV. The span at 574 to 590 shows a compositional bias: basic and acidic residues; sequence QQDKKEIKEKVEEREEE. Residues 591-605 are compositionally biased toward acidic residues; that stretch reads KQEEEEEEKEKEEES.

This sequence belongs to the CLPTM1 family.

It localises to the membrane. The sequence is that of CLPTM1-like membrane protein cnrB (cnrB) from Dictyostelium discoideum (Social amoeba).